The sequence spans 85 residues: UPF0473 protein CLK_1946 (85 aa).

It belongs to the UPF0473 family.

The polypeptide is UPF0473 protein CLK_1946 (Clostridium botulinum (strain Loch Maree / Type A3)).